Here is a 125-residue protein sequence, read N- to C-terminus: Glycine cleavage system H protein (125 aa).

A Lipoyl-binding domain is found at 22–104; it reads SYVIGITDFA…YDTGWILKLE (83 aa). Position 63 is an N6-lipoyllysine (K63).

The protein belongs to the GcvH family. The glycine cleavage system is composed of four proteins: P, T, L and H. It depends on (R)-lipoate as a cofactor.

In terms of biological role, the glycine cleavage system catalyzes the degradation of glycine. The H protein shuttles the methylamine group of glycine from the P protein to the T protein. Functionally, is also involved in protein lipoylation via its role as an octanoyl/lipoyl carrier protein intermediate. The chain is Glycine cleavage system H protein from Listeria monocytogenes serotype 4b (strain CLIP80459).